Here is a 398-residue protein sequence, read N- to C-terminus: tRNA-specific 2-thiouridylase MnmA (398 aa).

Residues 20-27 (AMSGGVDS) and L46 each bind ATP. Residue C114 is the Nucleophile of the active site. Cysteines 114 and 210 form a disulfide. Residue G138 participates in ATP binding. The tract at residues 160 to 162 (RDQ) is interaction with tRNA. C210 acts as the Cysteine persulfide intermediate in catalysis.

The protein belongs to the MnmA/TRMU family.

It localises to the cytoplasm. It catalyses the reaction S-sulfanyl-L-cysteinyl-[protein] + uridine(34) in tRNA + AH2 + ATP = 2-thiouridine(34) in tRNA + L-cysteinyl-[protein] + A + AMP + diphosphate + H(+). Catalyzes the 2-thiolation of uridine at the wobble position (U34) of tRNA, leading to the formation of s(2)U34. This chain is tRNA-specific 2-thiouridylase MnmA, found in Brucella suis (strain ATCC 23445 / NCTC 10510).